The sequence spans 200 residues: Probable DNA-directed RNA polymerase subunit delta (200 aa).

An HTH HARE-type domain is found at 19–88 (LSMIEVARAI…GDNKWGLRSW (70 aa)). Composition is skewed to acidic residues over residues 125-143 (DSDA…DAYE) and 150-200 (YDDE…TSEE). The disordered stretch occupies residues 125 to 200 (DSDAIDYNAD…SDDDAETSEE (76 aa)).

This sequence belongs to the RpoE family. In terms of assembly, RNAP is composed of a core of 2 alpha, a beta and a beta' subunits. The core is associated with a delta subunit and one of several sigma factors.

Functionally, participates in both the initiation and recycling phases of transcription. In the presence of the delta subunit, RNAP displays an increased specificity of transcription, a decreased affinity for nucleic acids, and an increased efficiency of RNA synthesis because of enhanced recycling. This chain is Probable DNA-directed RNA polymerase subunit delta, found in Streptococcus pneumoniae serotype 4 (strain ATCC BAA-334 / TIGR4).